A 500-amino-acid chain; its full sequence is Probable cytosol aminopeptidase (500 aa).

2 residues coordinate Mn(2+): K262 and D267. K274 is an active-site residue. Positions 285, 344, and 346 each coordinate Mn(2+). R348 is a catalytic residue.

Belongs to the peptidase M17 family. It depends on Mn(2+) as a cofactor.

It is found in the cytoplasm. It catalyses the reaction Release of an N-terminal amino acid, Xaa-|-Yaa-, in which Xaa is preferably Leu, but may be other amino acids including Pro although not Arg or Lys, and Yaa may be Pro. Amino acid amides and methyl esters are also readily hydrolyzed, but rates on arylamides are exceedingly low.. The enzyme catalyses Release of an N-terminal amino acid, preferentially leucine, but not glutamic or aspartic acids.. Presumably involved in the processing and regular turnover of intracellular proteins. Catalyzes the removal of unsubstituted N-terminal amino acids from various peptides. This chain is Probable cytosol aminopeptidase, found in Ehrlichia ruminantium (strain Welgevonden).